A 403-amino-acid polypeptide reads, in one-letter code: Glutamyl-tRNA reductase 2 (403 aa).

Residues 47–50, S98, 103–105, and Q109 contribute to the substrate site; these read TCHR and ETD. C48 (nucleophile) is an active-site residue. 177-182 lines the NADP(+) pocket; that stretch reads GAGAVG.

This sequence belongs to the glutamyl-tRNA reductase family. Homodimer.

It carries out the reaction (S)-4-amino-5-oxopentanoate + tRNA(Glu) + NADP(+) = L-glutamyl-tRNA(Glu) + NADPH + H(+). It participates in porphyrin-containing compound metabolism; protoporphyrin-IX biosynthesis; 5-aminolevulinate from L-glutamyl-tRNA(Glu): step 1/2. Catalyzes the NADPH-dependent reduction of glutamyl-tRNA(Glu) to glutamate 1-semialdehyde (GSA). This Pyrobaculum arsenaticum (strain DSM 13514 / JCM 11321 / PZ6) protein is Glutamyl-tRNA reductase 2.